Here is a 274-residue protein sequence, read N- to C-terminus: Hydroxyacylglutathione hydrolase, cytoplasmic isozyme (274 aa).

The Zn(2+) site is built by H59, H61, D63, H64, H121, and D144. Residues R153 and 188–190 (HEY) contribute to the substrate site. H188 contacts Zn(2+). Position 257 is a phosphoserine (S257). 268 to 271 (RAMK) contributes to the substrate binding site.

This sequence belongs to the metallo-beta-lactamase superfamily. Glyoxalase II family. Zn(2+) is required as a cofactor.

It is found in the cytoplasm. The catalysed reaction is an S-(2-hydroxyacyl)glutathione + H2O = a 2-hydroxy carboxylate + glutathione + H(+). The enzyme catalyses (R)-S-lactoylglutathione + H2O = (R)-lactate + glutathione + H(+). Its pathway is secondary metabolite metabolism; methylglyoxal degradation; (R)-lactate from methylglyoxal: step 2/2. With respect to regulation, inhibited by various thiol compounds such as glutathione and coenzyme A. Its function is as follows. Thiolesterase that catalyzes the hydrolysis of S-D-lactoylglutathione to form glutathione and D-lactic acid. Involved in the metabolism of methylglyoxal, a toxic compound for yeast proliferation, by converting methylglyoxal to lactate via S-D-lactoylglutathione by sequential enzyme reactions catalyzed by glyoxalase I and glyoxalase II. This is Hydroxyacylglutathione hydrolase, cytoplasmic isozyme from Saccharomyces cerevisiae (strain ATCC 204508 / S288c) (Baker's yeast).